The chain runs to 225 residues: Glucosyl-3-phosphoglycerate phosphatase (225 aa).

A substrate-binding site is contributed by Arg-10. His-11 (tele-phosphohistidine intermediate) is an active-site residue. Arg-60 is a binding site for substrate. Residue Glu-84 is the Proton donor/acceptor of the active site. Residue His-158 participates in substrate binding.

This sequence belongs to the phosphoglycerate mutase family. As to quaternary structure, homodimer.

It catalyses the reaction (2R)-2-O-(alpha-D-glucopyranosyl)-3-phospho-glycerate + H2O = (2R)-2-O-(alpha-D-glucopyranosyl)-glycerate + phosphate. In terms of biological role, involved in the biosynthesis of mycobacterial methylglucose lipopolysaccharides (MGLP). Catalyzes the dephosphorylation of glucosyl-3-phosphoglycerate (GPG) to glucosylglycerate. The protein is Glucosyl-3-phosphoglycerate phosphatase of Mycolicibacterium vanbaalenii (strain DSM 7251 / JCM 13017 / BCRC 16820 / KCTC 9966 / NRRL B-24157 / PYR-1) (Mycobacterium vanbaalenii).